The chain runs to 78 residues: RTX-VII (78 aa).

The first 22 residues, 1–22, serve as a signal peptide directing secretion; that stretch reads MKTIVYLIVSILLLSSTVLVLA. Residues 23-40 constitute a propeptide that is removed on maturation; that stretch reads EGNAASHELQEYPIEEQR. 4 disulfides stabilise this stretch: C42–C58, C47–C63, C57–C73, and C65–C71. At R76 the chain carries Arginine amide.

As to expression, expressed by the venom gland.

The protein localises to the secreted. In terms of biological role, agonist of rat Nav1.3/SCN3A. This toxin increases the peak current amplitude, and potently inhibits the fast inactivation of the channel (EC(50)=120 nM). The inhibition of fast inactivation is voltage-independent (depolarizing voltages ranging from 220 mV to 130 mV). The toxin might bind to the domain IV of the Nav1.3 channel, while domain II might not participate in interacting with the toxin but could determine the efficacy of RTX-VII. In vivo, when intracerebroventricularly injected into mice, the toxin causes involuntary body twitching (seizure-like symptoms). In Macrothele raveni (Funnel-web spider), this protein is RTX-VII.